The sequence spans 952 residues: Anion exchange protein 4 (952 aa).

The disordered stretch occupies residues 1-41; it reads MKLPGQGDFESSDAHENAHSEEPDSGLGPGPGLNGPSGIDI. The segment covering 12–22 has biased composition (basic and acidic residues); that stretch reads SDAHENAHSEE. 4 consecutive transmembrane segments (helical) span residues 385–405, 413–433, 470–490, and 501–521; these read AVFY…GLLG, GVLE…LMAG, VGIW…SLLV, and FCAL…LNLI. Residues Asn546 and Asn569 are each glycosylated (N-linked (GlcNAc...) asparagine). A run of 7 helical transmembrane segments spans residues 593–613, 634–654, 681–701, 727–747, 784–804, 807–827, and 870–890; these read VPDI…CAIA, FSSV…GLAT, PWWL…LIFM, LFCV…WYVS, GLVV…LKFI, PVLY…IQFV, and VVKS…LVAI. The tract at residues 915–938 is disordered; sequence ETIPENRSEPEHLFSGNDSEDSEL. N-linked (GlcNAc...) asparagine glycans are attached at residues Asn920, Asn931, and Asn948.

This sequence belongs to the anion exchanger (TC 2.A.31) family. As to expression, expressed in submandibular gland (SMG) duct and cortical collecting duct (CCD) of kidney. Lower expressed in duodenal villi.

It localises to the basolateral cell membrane. It carries out the reaction 2 hydrogencarbonate(out) + chloride(in) + Na(+)(out) = 2 hydrogencarbonate(in) + chloride(out) + Na(+)(in). The catalysed reaction is K(+)(in) + 2 hydrogencarbonate(in) + chloride(out) = K(+)(out) + 2 hydrogencarbonate(out) + chloride(in). The enzyme catalyses Li(+)(in) + 2 hydrogencarbonate(in) + chloride(out) = Li(+)(out) + 2 hydrogencarbonate(out) + chloride(in). It catalyses the reaction Rb(+)(in) + 2 hydrogencarbonate(in) + chloride(out) = Rb(+)(out) + 2 hydrogencarbonate(out) + chloride(in). It carries out the reaction Cs(+)(in) + 2 hydrogencarbonate(in) + chloride(out) = Cs(+)(out) + 2 hydrogencarbonate(out) + chloride(in). Its activity is regulated as follows. Cl(-)/HCO3(-) exchanger activity is substantially increased in response to 5 uM isoproterenol. Cl(-)/HCO3(-) exchanger activity is increased by both forskolin and coexpression with the catalytic subunit alpha of PKA. Electroneutral Cl(-)/HCO3(-) antiporter that favors chloride ion entry and efflux of hydrogencarbonate and sodium ion across the basolateral membrane and may participate in salivary secretion. Also mediates Cl(-)/HCO3(-) exchange activity in the presence of K(+) as well as Cs(+), Li(+), and Rb(+). Does not contribute to Cl(-)/HCO3(-) exchanger in the apical membrane of the upper villous epithelium. The protein is Anion exchange protein 4 of Mus musculus (Mouse).